A 1316-amino-acid polypeptide reads, in one-letter code: DNA-directed RNA polymerase subunit beta' (1316 aa).

Zn(2+)-binding residues include Cys60, Cys62, Cys75, and Cys78. Mg(2+)-binding residues include Asp535, Asp537, and Asp539. Zn(2+) contacts are provided by Cys891, Cys968, Cys975, and Cys978.

It belongs to the RNA polymerase beta' chain family. The RNAP catalytic core consists of 2 alpha, 1 beta, 1 beta' and 1 omega subunit. When a sigma factor is associated with the core the holoenzyme is formed, which can initiate transcription. It depends on Mg(2+) as a cofactor. Zn(2+) is required as a cofactor.

It carries out the reaction RNA(n) + a ribonucleoside 5'-triphosphate = RNA(n+1) + diphosphate. In terms of biological role, DNA-dependent RNA polymerase catalyzes the transcription of DNA into RNA using the four ribonucleoside triphosphates as substrates. The chain is DNA-directed RNA polymerase subunit beta' from Mycobacterium tuberculosis (strain ATCC 25177 / H37Ra).